Here is a 306-residue protein sequence, read N- to C-terminus: Homeobox protein HMX3 (306 aa).

The tract at residues 95-181 is disordered; sequence HTPRTEVPDK…DKKPCRKKKT (87 aa). Composition is skewed to basic and acidic residues over residues 117-143 and 153-174; these read GERDSPEPIHPLKAELEAKDSESKSPE and EEGKKDDSGEDWKKREESPDKK. Residues 178 to 237 constitute a DNA-binding region (homeobox); the sequence is KKKTRTVFSRSQVFQLESTFDMKRYLSSSERAGLAASLHLTETQVKIWFQNRRNKWKRQL.

It belongs to the HMX homeobox family.

It localises to the nucleus. Transcription factor involved in specification of neuronal cell types and which is required for inner ear and hypothalamus development. Binds to the 5'-CAAGTG-3' core sequence. May act as a stage-specific inhibitor of anf1 in the anterior neural plate during the development. The polypeptide is Homeobox protein HMX3 (hmx3) (Xenopus tropicalis (Western clawed frog)).